Reading from the N-terminus, the 239-residue chain is Adapter protein MecA (239 aa).

The segment covering 118-128 (EQRTKEKEAQG) has biased composition (basic and acidic residues). A disordered region spans residues 118–137 (EQRTKEKEAQGSKRQKSSAR).

The protein belongs to the MecA family. Homodimer.

In terms of biological role, enables the recognition and targeting of unfolded and aggregated proteins to the ClpC protease or to other proteins involved in proteolysis. The protein is Adapter protein MecA of Staphylococcus aureus (strain Mu3 / ATCC 700698).